The primary structure comprises 353 residues: Putative actin-28 (353 aa).

Belongs to the actin family.

The protein resides in the cytoplasm. The protein localises to the cytoskeleton. The catalysed reaction is ATP + H2O = ADP + phosphate + H(+). In terms of biological role, actins are highly conserved proteins that are involved in various types of cell motility and are ubiquitously expressed in all eukaryotic cells. Multiple isoforms are involved in various cellular functions such as cytoskeleton structure, cell mobility, chromosome movement and muscle contraction. The polypeptide is Putative actin-28 (act28) (Dictyostelium discoideum (Social amoeba)).